Consider the following 131-residue polypeptide: uncharacterized protein (131 aa).

One can recognise an HTH hxlR-type domain in the interval 26–124 (CSVEVAVNEI…WGKMYGSHQE (99 aa)).

This is an uncharacterized protein from Methanothermobacter thermautotrophicus (strain ATCC 29096 / DSM 1053 / JCM 10044 / NBRC 100330 / Delta H) (Methanobacterium thermoautotrophicum).